The chain runs to 478 residues: Transcription factor PIF1 (478 aa).

Position 10 is a phosphothreonine; by CK2 (threonine 10). 5 disordered regions span residues 56–80 (LHTK…QPSS), 122–144 (VSQV…PVRN), 172–210 (VRES…GGGA), 230–294 (TSSS…LSER), and 391–478 (TQTH…HTTG). Over residues 69–80 (LPSMDPQQQPSS) the composition is skewed to low complexity. Over residues 179-189 (SPSATPSAAAS) the composition is skewed to low complexity. The residue at position 197 (threonine 197) is a Phosphothreonine; by CK2. Serine 202 carries the post-translational modification Phosphoserine; by CK2. 2 stretches are compositionally biased toward basic and acidic residues: residues 238-272 (SEIE…ETKQ) and 284-294 (RAAEVHNLSER). The bHLH domain occupies 284 to 333 (RAAEVHNLSERKRRDRINERMKALQELIPRCNKSDKASMLDEAIEYMKSL). A compositionally biased stretch (polar residues) spans 415 to 426 (PNQQYDPTSGQP). Residues serine 464, serine 465, serine 466, and serine 469 each carry the phosphoserine; by CK2 modification. Positions 465–478 (SSKESEDHGNHTTG) are enriched in basic and acidic residues.

As to quaternary structure, homodimer. Interacts with the photoactivated conformer (Pfr) of phytochromes A and B, PHYA and PHYB. Also interacts with APRR1/TOC1. Binds to RGL2, RGA and FHY3 (via N-terminus). Associates to PTAC12/HMR/PAP5 which acts as a transcriptional coactivator. Binds directly to PCH1 and PCHL; this interaction facilitates its association with phyB and its subsequent light-induced degradation. Phosphorylated at Thr-10, Thr-197, Ser-202, Ser-464, Ser-465, Ser-466 and Ser-469 by CK2. Phosphorylated and ubiquitinated after an exposure to light (especially red and far-red), in a phytochrome-dependent manner. Modified proteins undergo a proteasome-dependent degradation. Its stability and degradation plays a central role in photomorphogenesis of seedlings. As to expression, mainly expressed in leaves, stems and seedlings, and, to a lower extent, in fruits, flowers and roots.

It localises to the nucleus. With respect to regulation, DNA-binding ability is inhibited by PCH1 and PCHL to negatively regulate the expressions of its target genes. In terms of biological role, transcription activator. Negatively regulates chlorophyll biosynthesis and seed germination in the dark, and lightinduced degradation of PIF1 relieves this negative regulation to promote photomorphogenesis. Binds to the G-box motif (5'-CACGTG-3') found in many light-regulated promoters. Promotes the expression of SOM, and thus modulates responses to abscisic acid (ABA) and gibberellic acid (GA). The protein is Transcription factor PIF1 of Arabidopsis thaliana (Mouse-ear cress).